The chain runs to 360 residues: Cyclin-dependent kinase 10 (360 aa).

The 285-residue stretch at 39-323 (FEKLNRIGEG…SGDCLESSYF (285 aa)) folds into the Protein kinase domain. ATP contacts are provided by residues 45–53 (IGEGTYGIV) and lysine 68. The Proton acceptor role is filled by aspartate 163. The residue at position 196 (threonine 196) is a Phosphothreonine. A disordered region spans residues 334–360 (LMPTFPHHRNKRAAPAAAEGQSKRCRP).

It belongs to the protein kinase superfamily. CMGC Ser/Thr protein kinase family. CDC2/CDKX subfamily. Heterodimer with CCNQ, the interaction is required for kinase activity. Interacts with ETS2. Interacts with PRK2.

It localises to the cytoplasm. It is found in the cytoskeleton. The protein localises to the cilium basal body. The catalysed reaction is L-seryl-[protein] + ATP = O-phospho-L-seryl-[protein] + ADP + H(+). It carries out the reaction L-threonyl-[protein] + ATP = O-phospho-L-threonyl-[protein] + ADP + H(+). Its function is as follows. Cyclin-dependent kinase that phosphorylates the transcription factor ETS2 (in vitro) and positively controls its proteasomal degradation (in cells). Involved in the regulation of actin cytoskeleton organization through the phosphorylation of actin dynamics regulators such as PKN2. Is a negative regulator of ciliogenesis through phosphorylation of PKN2 and promotion of RhoA signaling. In Mus musculus (Mouse), this protein is Cyclin-dependent kinase 10 (Cdk10).